A 361-amino-acid polypeptide reads, in one-letter code: 3-dehydroquinate synthase (361 aa).

NAD(+) contacts are provided by residues 105–109, 129–130, Lys142, Lys151, and 169–172; these read GVIGD, TT, and FLST. Positions 184, 247, and 264 each coordinate Zn(2+).

This sequence belongs to the sugar phosphate cyclases superfamily. Dehydroquinate synthase family. Co(2+) serves as cofactor. It depends on Zn(2+) as a cofactor. Requires NAD(+) as cofactor.

The protein localises to the cytoplasm. It carries out the reaction 7-phospho-2-dehydro-3-deoxy-D-arabino-heptonate = 3-dehydroquinate + phosphate. It functions in the pathway metabolic intermediate biosynthesis; chorismate biosynthesis; chorismate from D-erythrose 4-phosphate and phosphoenolpyruvate: step 2/7. Catalyzes the conversion of 3-deoxy-D-arabino-heptulosonate 7-phosphate (DAHP) to dehydroquinate (DHQ). This chain is 3-dehydroquinate synthase, found in Endomicrobium trichonymphae.